Here is a 249-residue protein sequence, read N- to C-terminus: MSFTVIIPARYQSTRLPGKPLADICGKPMIQWVYEQASKAGADRVIIATDDSRIEAVVKGFGGDVCMTSPNHESGTERLAEVIDKCGIASNEIVVNVQGDEPLIPPSIIRQVAKNLADSIAPMATLAVTIDEEEDVFNPNAVKVVTDAEGYALYFSRAAIPWDRDAFAKGEALTANPLLRHIGIYAYRAGFINTYINWQPSVLEKIECLEQLRVLWYGEKIHVAVAKEAPAAGVDTQEDLDKVRAILAL.

It belongs to the KdsB family.

The protein resides in the cytoplasm. It catalyses the reaction 3-deoxy-alpha-D-manno-oct-2-ulosonate + CTP = CMP-3-deoxy-beta-D-manno-octulosonate + diphosphate. The protein operates within nucleotide-sugar biosynthesis; CMP-3-deoxy-D-manno-octulosonate biosynthesis; CMP-3-deoxy-D-manno-octulosonate from 3-deoxy-D-manno-octulosonate and CTP: step 1/1. It functions in the pathway bacterial outer membrane biogenesis; lipopolysaccharide biosynthesis. In terms of biological role, activates KDO (a required 8-carbon sugar) for incorporation into bacterial lipopolysaccharide in Gram-negative bacteria. The chain is 3-deoxy-manno-octulosonate cytidylyltransferase from Aliivibrio salmonicida (strain LFI1238) (Vibrio salmonicida (strain LFI1238)).